Here is a 402-residue protein sequence, read N- to C-terminus: Multidrug resistance protein MdtH (402 aa).

A run of 11 helical transmembrane segments spans residues 13 to 33 (YFLL…FPLI), 34 to 54 (SIRF…ALGL), 99 to 116 (PWLL…GTLF), 139 to 159 (LLMM…SWLL), 165 to 185 (LVCA…AWLL), 214 to 234 (VLTL…LPIM), 243 to 263 (AAVK…LYPI), 277 to 297 (LMAG…VSSV), 300 to 320 (LFVL…ARET), 340 to 360 (LGLA…FDSG), and 368 to 388 (LPWV…WWQF).

The protein belongs to the major facilitator superfamily. DHA1 family. MdtH (TC 2.A.1.2.21) subfamily.

Its subcellular location is the cell inner membrane. The polypeptide is Multidrug resistance protein MdtH (Enterobacter sp. (strain 638)).